We begin with the raw amino-acid sequence, 97 residues long: Putative septation protein SpoVG (97 aa).

It belongs to the SpoVG family.

Functionally, essential for sporulation. Interferes with or is a negative regulator of the pathway leading to asymmetric septation. The polypeptide is Putative septation protein SpoVG (Bacillus cytotoxicus (strain DSM 22905 / CIP 110041 / 391-98 / NVH 391-98)).